Reading from the N-terminus, the 309-residue chain is MPDLTSVVQEIAEEMRERPDRGEVATYIPELARADPKAFGLVVIDADGQVAAAGDSDVPFSIQSISKVFTLTLALGMVGDRLWRRVGREPSGSPFNSIVQLEYERGIPRNPFINAGAIAVTDLILSRHQPREALGEILRFMQFLAQDSSIAIDEAVAASELRTGFRNAALANFMKAHGVIDNPVEYTLGVYFHHCAIAMTCRQLAEAGRFLAHSGRNPSTGHLVVQPERARRINAVMLTCGHYDGSGEFAFRVGLPGKSGVGGGILAVAPGRASIAVWSPGLDASGNSHLGRIALERLTKRLGWSIFGQ.

Positions 64, 114, 160, 167, 191, 243, and 261 each coordinate substrate.

This sequence belongs to the glutaminase family. In terms of assembly, homotetramer.

The enzyme catalyses L-glutamine + H2O = L-glutamate + NH4(+). This Methylobacterium nodulans (strain LMG 21967 / CNCM I-2342 / ORS 2060) protein is Glutaminase.